We begin with the raw amino-acid sequence, 249 residues long: Neurotrophic factor BDNF precursor form (249 aa).

The N-terminal stretch at 1 to 18 (MTILFLTMVISYFGCMKA) is a signal peptide. Positions 19 to 130 (APMKEVNVHG…AANMSMRVRR (112 aa)) are excised as a propeptide. The N-linked (GlcNAc...) asparagine glycan is linked to Asn-123. 3 disulfide bridges follow: Cys-143-Cys-210, Cys-188-Cys-239, and Cys-198-Cys-241.

The protein belongs to the NGF-beta family. In terms of assembly, monomers and homodimers. Binds to NTRK2/TRKB. Can form heterodimers with other neurotrophin family members, such as NTF3 and NTF4 (in vitro), but the physiological relevance of this is not clear. BDNF precursor form: interacts with the heterodimer formed by NGFR and SORCS2. Mature BDNF has much lower affinity for the heterodimer formed by NGFR and SORCS2. Post-translationally, N-glycosylated and glycosulfated, contrary to mature BDNF. In terms of processing, mature BDNF is produced by proteolytic removal of the propeptide, catalyzed by a FURIN family member. In addition, the precursor form is proteolytically cleaved within the propeptide, but this is not an obligatory intermediate for the production of mature BDNF. Can be converted into mature BDNF by plasmin (PLG). In terms of tissue distribution, expressed in the dorsal root ganglion and the spinal cord (at protein level). Detected in brain, especially in brain cortex, hippocampus, midbrain and cerebellum.

Its subcellular location is the secreted. Functionally, important signaling molecule that activates signaling cascades downstream of NTRK2. During development, promotes the survival and differentiation of selected neuronal populations of the peripheral and central nervous systems. Participates in axonal growth, pathfinding and in the modulation of dendritic growth and morphology. Major regulator of synaptic transmission and plasticity at adult synapses in many regions of the CNS. The versatility of BDNF is emphasized by its contribution to a range of adaptive neuronal responses including long-term potentiation (LTP), long-term depression (LTD), certain forms of short-term synaptic plasticity, as well as homeostatic regulation of intrinsic neuronal excitability. Important signaling molecule that activates signaling cascades downstream of NTRK2. Activates signaling cascades via the heterodimeric receptor formed by NGFR and SORCS2. Signaling via NGFR and SORCS2 plays a role in synaptic plasticity and long-term depression (LTD). Binding to NGFR and SORCS2 promotes neuronal apoptosis. Promotes neuronal growth cone collapse. The chain is Neurotrophic factor BDNF precursor form (Bdnf) from Mus musculus (Mouse).